A 485-amino-acid chain; its full sequence is 2-succinylbenzoate--CoA ligase (485 aa).

This sequence belongs to the ATP-dependent AMP-binding enzyme family. MenE subfamily.

The enzyme catalyses 2-succinylbenzoate + ATP + CoA = 2-succinylbenzoyl-CoA + AMP + diphosphate. It participates in quinol/quinone metabolism; 1,4-dihydroxy-2-naphthoate biosynthesis; 1,4-dihydroxy-2-naphthoate from chorismate: step 5/7. The protein operates within quinol/quinone metabolism; menaquinone biosynthesis. Functionally, converts 2-succinylbenzoate (OSB) to 2-succinylbenzoyl-CoA (OSB-CoA). The polypeptide is 2-succinylbenzoate--CoA ligase (Enterococcus faecalis (strain ATCC 700802 / V583)).